The primary structure comprises 129 residues: Small ribosomal subunit protein uS11 (129 aa).

This sequence belongs to the universal ribosomal protein uS11 family. Part of the 30S ribosomal subunit. Interacts with proteins S7 and S18. Binds to IF-3.

Functionally, located on the platform of the 30S subunit, it bridges several disparate RNA helices of the 16S rRNA. Forms part of the Shine-Dalgarno cleft in the 70S ribosome. This Nitrosomonas eutropha (strain DSM 101675 / C91 / Nm57) protein is Small ribosomal subunit protein uS11.